Here is a 156-residue protein sequence, read N- to C-terminus: Small ribosomal subunit protein uS7 (156 aa).

The protein belongs to the universal ribosomal protein uS7 family. In terms of assembly, part of the 30S ribosomal subunit. Contacts proteins S9 and S11.

In terms of biological role, one of the primary rRNA binding proteins, it binds directly to 16S rRNA where it nucleates assembly of the head domain of the 30S subunit. Is located at the subunit interface close to the decoding center, probably blocks exit of the E-site tRNA. The protein is Small ribosomal subunit protein uS7 of Clostridium tetani (strain Massachusetts / E88).